The primary structure comprises 105 residues: Small ribosomal subunit protein uS10 (105 aa).

The protein belongs to the universal ribosomal protein uS10 family. Part of the 30S ribosomal subunit.

Its function is as follows. Involved in the binding of tRNA to the ribosomes. This Bdellovibrio bacteriovorus (strain ATCC 15356 / DSM 50701 / NCIMB 9529 / HD100) protein is Small ribosomal subunit protein uS10.